The following is a 415-amino-acid chain: uncharacterized protein (415 aa).

The span at 179-199 shows a compositional bias: pro residues; it reads SPAPCSPAPGSPPPPAPPAAP. Residues 179 to 200 are disordered; that stretch reads SPAPCSPAPGSPPPPAPPAAPA.

It belongs to the herpesviridae BTRF1 family.

This is an uncharacterized protein from Equus caballus (Horse).